The sequence spans 208 residues: Thioredoxin domain-containing protein 9 (208 aa).

One can recognise a Thioredoxin domain in the interval 68–179 (YEEVADEKEF…MENRLARSEV (112 aa)).

In terms of tissue distribution, expressed throughout the body with high expression in the nervous system, including the ventral nerve cord and tail neurons, and vulva.

It is found in the nucleus. It localises to the cytoplasm. Functionally, required for normal microtubule organization and function. Regulates tubulin acetylation in ALM and PLM neurons. This chain is Thioredoxin domain-containing protein 9, found in Caenorhabditis elegans.